A 169-amino-acid chain; its full sequence is Putative hydrolase 111R (169 aa).

The Nudix hydrolase domain maps to 46-169 (FEKRKAGVFV…QKILMALSCN (124 aa)). Positions 76-98 (GHMEAYDHSPKTCAERELKEETG) match the Nudix box motif. The Mg(2+) site is built by E92, E96, and D138.

The protein belongs to the Nudix hydrolase family. Mg(2+) serves as cofactor. It depends on Mn(2+) as a cofactor.

This chain is Putative hydrolase 111R, found in Aedes vexans (Inland floodwater mosquito).